We begin with the raw amino-acid sequence, 162 residues long: Ribosome maturation factor RimP (162 aa).

Belongs to the RimP family.

Its subcellular location is the cytoplasm. Functionally, required for maturation of 30S ribosomal subunits. This chain is Ribosome maturation factor RimP, found in Leptospira interrogans serogroup Icterohaemorrhagiae serovar copenhageni (strain Fiocruz L1-130).